The primary structure comprises 716 residues: Fatty acid oxidation complex subunit alpha (716 aa).

The enoyl-CoA hydratase/isomerase stretch occupies residues 1-189; it reads MIYQSPTIQV…KVGAVDSVVA (189 aa). A substrate-binding site is contributed by Asp296. Residues 311–716 form a 3-hydroxyacyl-CoA dehydrogenase region; it reads KEVNNAAVLG…AANNGSYYQA (406 aa). Residues Met324, Asp343, 400–402, Lys407, and Ser429 contribute to the NAD(+) site; that span reads VVE. His450 serves as the catalytic For 3-hydroxyacyl-CoA dehydrogenase activity. Asn453 lines the NAD(+) pocket. Residues Asn500 and Tyr660 each coordinate substrate.

In the N-terminal section; belongs to the enoyl-CoA hydratase/isomerase family. This sequence in the C-terminal section; belongs to the 3-hydroxyacyl-CoA dehydrogenase family. Heterotetramer of two alpha chains (FadB) and two beta chains (FadA).

It catalyses the reaction a (3S)-3-hydroxyacyl-CoA + NAD(+) = a 3-oxoacyl-CoA + NADH + H(+). The catalysed reaction is a (3S)-3-hydroxyacyl-CoA = a (2E)-enoyl-CoA + H2O. The enzyme catalyses a 4-saturated-(3S)-3-hydroxyacyl-CoA = a (3E)-enoyl-CoA + H2O. It carries out the reaction (3S)-3-hydroxybutanoyl-CoA = (3R)-3-hydroxybutanoyl-CoA. It catalyses the reaction a (3Z)-enoyl-CoA = a 4-saturated (2E)-enoyl-CoA. The catalysed reaction is a (3E)-enoyl-CoA = a 4-saturated (2E)-enoyl-CoA. The protein operates within lipid metabolism; fatty acid beta-oxidation. Functionally, involved in the aerobic and anaerobic degradation of long-chain fatty acids via beta-oxidation cycle. Catalyzes the formation of 3-oxoacyl-CoA from enoyl-CoA via L-3-hydroxyacyl-CoA. It can also use D-3-hydroxyacyl-CoA and cis-3-enoyl-CoA as substrate. The polypeptide is Fatty acid oxidation complex subunit alpha (Shewanella baltica (strain OS185)).